A 185-amino-acid polypeptide reads, in one-letter code: Anaphase-promoting complex subunit 10 (185 aa).

N-acetylthreonine is present on threonine 2. A DOC domain is found at 2 to 185 (TTPNKTPPGA…IDFMMYRSIR (184 aa)). Residue lysine 169 is modified to N6-acetyllysine.

The protein belongs to the APC10 family. In terms of assembly, the mammalian APC/C is composed at least of 14 distinct subunits ANAPC1, ANAPC2, CDC27/APC3, ANAPC4, ANAPC5, CDC16/APC6, ANAPC7, CDC23/APC8, ANAPC10, ANAPC11, CDC26/APC12, ANAPC13, ANAPC15 and ANAPC16 that assemble into a complex of at least 19 chains with a combined molecular mass of around 1.2 MDa; APC/C interacts with FZR1 and FBXO5. The C-terminus of APC10 binds to CDC27/APC3. Interacts with PIWIL1; interaction only takes place when PIWIL1 binds piRNA. Interacts with FBXO43; the interaction is direct.

Its pathway is protein modification; protein ubiquitination. Its function is as follows. Component of the anaphase promoting complex/cyclosome (APC/C), a cell cycle-regulated E3 ubiquitin ligase that controls progression through mitosis and the G1 phase of the cell cycle. The APC/C complex acts by mediating ubiquitination and subsequent degradation of target proteins: it mainly mediates the formation of 'Lys-11'-linked polyubiquitin chains and, to a lower extent, the formation of 'Lys-48'- and 'Lys-63'-linked polyubiquitin chains. The APC/C complex catalyzes assembly of branched 'Lys-11'-/'Lys-48'-linked branched ubiquitin chains on target proteins. In Bos taurus (Bovine), this protein is Anaphase-promoting complex subunit 10 (ANAPC10).